The chain runs to 494 residues: MAMSLPGSRRTSAGSRRRTSPPVSVRDAYGTSSLSSSSNSGSYKGSDSSPTPRRSMKYTLCSDNHGIKPPTPEQYLTPLQQKEVCIRHLKARLKDTQDRLQDRDTEIDDLKTQLSRMQEDWIEEECHRVEAQLALKEARKEIKQLKQVIDTVKNNLIDKDKGLQKYFVDINIQNKKLETLLHSMEVAQNGMAKEDGTGESAGGSPARSLTRSSTYTKLSDPAVCGDRQPGDPSSGSAEDGADSGFAAADDTLSRTDALEASSLLSSGVDCGTEETSLHSSFGLGPRFPASNTYEKLLCGMEAGVQASCMQERAIQTDFVQYQPDLDTILEKVTQAQVCGTDPESGDRCPELDAHPSGPRDPNSAVVVTVGDELEAPEPITRGPTPQRPGANPNPGQSVSVVCPMEEEEEAAVAEKEPKSYWSRHYIVDLLAVVVPAVPTVAWLCRSQRRQGQPIYNISSLLRGCCTVALHSIRRISCRSLSQPSPSPAGGGSQL.

The segment at 1-75 (MAMSLPGSRR…GIKPPTPEQY (75 aa)) is disordered. The segment covering 7–49 (GSRRTSAGSRRRTSPPVSVRDAYGTSSLSSSSNSGSYKGSDSS) has biased composition (low complexity). A coiled-coil region spans residues 79 to 161 (LQQKEVCIRH…VKNNLIDKDK (83 aa)). Disordered stretches follow at residues 191–246 (MAKE…SGFA) and 338–398 (CGTD…GQSV). Ser200 and Ser204 each carry phosphoserine. A compositionally biased stretch (polar residues) spans 207-217 (RSLTRSSTYTK). Position 214 is a phosphothreonine (Thr214). Ser219 carries the phosphoserine modification. Residues 230 to 246 (GDPSSGSAEDGADSGFA) show a composition bias toward low complexity. Positions 344 to 353 (SGDRCPELDA) are enriched in basic and acidic residues. The chain crosses the membrane as a helical span at residues 425-444 (YIVDLLAVVVPAVPTVAWLC).

Binds to STX1A. Interacts with DNM1; this interaction inhibits the binding of DNM1 to AMPH and DNM1-receptor-mediated endocytosis. In terms of tissue distribution, brain specific. Found in synapses.

The protein resides in the membrane. It is found in the synapse. The protein localises to the synaptosome. Inhibits SNARE complex formation by absorbing free STX1A. The protein is Syntaphilin of Homo sapiens (Human).